The sequence spans 297 residues: MKSKSSRTRVAILGSGSIGLDLMFKVKASEQFDLKFVVGRNANSDGLRLARSCNVETSSDGLDFLKAHEDAYDLVFDATSAAAHKVNNRFFSDAGKFVIDLTPAKVGRLCVPCINLDDMGAEQNVNLITCGGQASLPLAYALKQAVDEIDYLEVVSAIASRSAGIATRENIDEYMTTTEYALAKFSDAKKTKAILNINPAEPGVRMQTTLYAYARYRDFDRVRASVADMVEKVREYVPGYRLVVEPLESQGRITIGLTVRGRGDYLPEYAGNLDIINCAALAVASHRHATARLGATQ.

15–18 is a binding site for NAD(+); it reads SGSI. Cysteine 130 (acyl-thioester intermediate) is an active-site residue. NAD(+) contacts are provided by residues 162–170 and asparagine 272; that span reads SAGIATREN.

It belongs to the acetaldehyde dehydrogenase family.

The catalysed reaction is acetaldehyde + NAD(+) + CoA = acetyl-CoA + NADH + H(+). The protein is Acetaldehyde dehydrogenase (mhpF) of Burkholderia pseudomallei (strain K96243).